We begin with the raw amino-acid sequence, 173 residues long: Small ribosomal subunit protein uS5 (173 aa).

The 64-residue stretch at 18-81 (LREKMIAVNR…EQARRGMFKV (64 aa)) folds into the S5 DRBM domain.

The protein belongs to the universal ribosomal protein uS5 family. Part of the 30S ribosomal subunit. Contacts proteins S4 and S8.

Functionally, with S4 and S12 plays an important role in translational accuracy. In terms of biological role, located at the back of the 30S subunit body where it stabilizes the conformation of the head with respect to the body. The polypeptide is Small ribosomal subunit protein uS5 (Bordetella avium (strain 197N)).